A 460-amino-acid chain; its full sequence is Ankyrin repeat and MYND domain-containing protein 2 (460 aa).

3 ANK repeats span residues 45–74 (HGMT…DVNC), 79–108 (HGYT…ETDV), and 159–188 (KLAG…NPLL). Residues cysteine 320, cysteine 323, cysteine 332, cysteine 335, cysteine 341, cysteine 345, histidine 353, and cysteine 357 each coordinate Zn(2+). The MYND-type zinc finger occupies 320 to 357 (CTTCGEKGADKRCSVCKVVMYCDQNCQKTHWFTHKKVC). Composition is skewed to basic and acidic residues over residues 371–387 (AAKE…KDEA) and 425–436 (ELTKEPEARAPR). Residues 371–460 (AAKEKRRQEK…ALQKIQDSEE (90 aa)) are disordered.

The protein localises to the cell projection. It localises to the cilium. May be involved in the trafficking of signaling proteins to the cilia. The chain is Ankyrin repeat and MYND domain-containing protein 2 (ANKMY2) from Gallus gallus (Chicken).